We begin with the raw amino-acid sequence, 552 residues long: MSKIADDQYFNDEEEDFAKLLEKEETLEKGTIKEGLIVSINENDGYAMVSVGGKTEGRLALNEITDEKGQLMYQKNDPIVVHVSEKGEHPSVSYKKAISQQKIQAKIEELGENYENAIIEGKIVGKNKGGYIVESQGVEYFLSRSHSSLKNDANHIGKRIKACIIRVDKENHSINISRKRFFEVNDKRQLEISKELLEATEPVLGVVRQITPFGIFVKFKGIDGLVHYSEISHKGPVNPEKYYKEGDEVYVKAIAYDEEKRRLSLSIKATIEDPWEEIQDKLKPGYAIKVVVSNIEHYGVFVDIGNDIEGFLHVSEISWDKNVSHPSHYLSVGQEIDVKIIDIDPKNRRLRVSLKQLTNRPFDVFESKHQVGDIVEGKVATLTDFGAFLNLGGVDGLLHNHDAFWDKDKKCKDHYKIGDVIKVKILKINKKDKKISLSAKHLVTSPTEEFAQKHKTDSVIQGKVVSIKDFGVFIHADGIDVLIKNEDLNPLKKDEIKIGQEITCVVVAIEKSNNKVRASVHRLERKKEKEELQAFNTSDDKMTLGDILKEKL.

S1 motif domains lie at 31–101 (TIKE…ISQQ), 116–179 (NAII…ISRK), 200–268 (TEPV…LSIK), 285–355 (GYAI…VSLK), 372–440 (GDIV…LSAK), and 457–521 (DSVI…ASVH).

Belongs to the bacterial ribosomal protein bS1 family.

Binds mRNA; thus facilitating recognition of the initiation point. It is needed to translate mRNA with a short Shine-Dalgarno (SD) purine-rich sequence. The sequence is that of Small ribosomal subunit protein bS1 (rpsA) from Helicobacter pylori (strain J99 / ATCC 700824) (Campylobacter pylori J99).